The chain runs to 499 residues: ATP synthase subunit beta, chloroplastic (499 aa).

170-177 (GGAGVGKT) contacts ATP.

Belongs to the ATPase alpha/beta chains family. F-type ATPases have 2 components, CF(1) - the catalytic core - and CF(0) - the membrane proton channel. CF(1) has five subunits: alpha(3), beta(3), gamma(1), delta(1), epsilon(1). CF(0) has four main subunits: a(1), b(1), b'(1) and c(9-12).

It localises to the plastid. The protein localises to the chloroplast thylakoid membrane. The catalysed reaction is ATP + H2O + 4 H(+)(in) = ADP + phosphate + 5 H(+)(out). Produces ATP from ADP in the presence of a proton gradient across the membrane. The catalytic sites are hosted primarily by the beta subunits. This chain is ATP synthase subunit beta, chloroplastic, found in Ipomoea purpurea (Common morning glory).